The primary structure comprises 160 residues: Transcription elongation factor GreA (160 aa).

A coiled-coil region spans residues 53-73 (AREEQGMVEARIRDIEGRLQN).

This sequence belongs to the GreA/GreB family.

Necessary for efficient RNA polymerase transcription elongation past template-encoded arresting sites. The arresting sites in DNA have the property of trapping a certain fraction of elongating RNA polymerases that pass through, resulting in locked ternary complexes. Cleavage of the nascent transcript by cleavage factors such as GreA or GreB allows the resumption of elongation from the new 3'terminus. GreA releases sequences of 2 to 3 nucleotides. In Pseudomonas putida (strain ATCC 47054 / DSM 6125 / CFBP 8728 / NCIMB 11950 / KT2440), this protein is Transcription elongation factor GreA.